We begin with the raw amino-acid sequence, 390 residues long: Uroporphyrinogen decarboxylase 2, chloroplastic (390 aa).

Residues 1–30 constitute a chloroplast transit peptide; that stretch reads MATACPPLSLQPAYLSGRSARARRPPPAVR. Residues 70–74, Phe-89, Ser-119, Asp-120, Tyr-197, Ser-252, and His-367 each bind substrate; that span reads RQAGR.

Belongs to the uroporphyrinogen decarboxylase family. Homodimer.

The protein localises to the plastid. Its subcellular location is the chloroplast. It catalyses the reaction uroporphyrinogen III + 4 H(+) = coproporphyrinogen III + 4 CO2. It functions in the pathway porphyrin-containing compound metabolism; protoporphyrin-IX biosynthesis; coproporphyrinogen-III from 5-aminolevulinate: step 4/4. Functionally, catalyzes the decarboxylation of four acetate groups of uroporphyrinogen-III to yield coproporphyrinogen-III. The chain is Uroporphyrinogen decarboxylase 2, chloroplastic from Oryza sativa subsp. japonica (Rice).